Consider the following 501-residue polypeptide: MEEKHQEETGELTLVLALATLIAAFGSSFQYGYNVAAVNSPSEFMQQFYNDTYYDRNEENIESFTLTLLWSLTVSMFPFGGFIGSLMVGTLVNKLGRKGALLFNNIFSILPAILMGCSQIAQSFELIIISRLLVGICAGISSNVVPMYLGELAPKNLRGALGVVPQLFITVGILVAQLFGLRSLLANEDGWPVLLGLTGVPAGLQLLLLPFFPESPRYLLIQKKDEAAAERALQTLRGWKDVHLEMEEIRKEDEAEKAAGFISVWKLFTMQSLRWQLISMIVLMAGQQLSGVNAIYYYADQIYLSAGVKSDDVQYVTAGTGAVNVFMTILTIFVVELWGRRFLLLVGFSTCLIACLVLTAALALQNTISWMPYISIVCVIVYVIGHALGPSPIPALLITEIFLQSSRPAAYMIGGSVHWLSNFTVGLIFPFIQMGLGPYSFIIFATICFLTTIYIFMVVPETKGRTFIEINQIFTMKNKVSDVYPKKEEELGALPHAILEQ.

Met1 carries the N-acetylmethionine modification. Over 1 to 17 (MEEKHQEETGELTLVLA) the chain is Cytoplasmic. Residues 18–38 (LATLIAAFGSSFQYGYNVAAV) form a helical membrane-spanning segment. Tyr31 is a binding site for D-fructose. Residues 39–67 (NSPSEFMQQFYNDTYYDRNEENIESFTLT) lie on the Extracellular side of the membrane. Asn50 carries N-linked (GlcNAc...) asparagine glycosylation. The helical transmembrane segment at 68–90 (LLWSLTVSMFPFGGFIGSLMVGT) threads the bilayer. The Cytoplasmic segment spans residues 91–97 (LVNKLGR). A helical transmembrane segment spans residues 98–118 (KGALLFNNIFSILPAILMGCS). The Extracellular portion of the chain corresponds to 119–125 (QIAQSFE). Residues 126–148 (LIIISRLLVGICAGISSNVVPMY) traverse the membrane as a helical segment. Over 149 to 160 (LGELAPKNLRGA) the chain is Cytoplasmic. The helical transmembrane segment at 161 to 181 (LGVVPQLFITVGILVAQLFGL) threads the bilayer. Gln166 contributes to the D-fructose binding site. Residues 182–191 (RSLLANEDGW) are Extracellular-facing. The helical transmembrane segment at 192–212 (PVLLGLTGVPAGLQLLLLPFF) threads the bilayer. The Cytoplasmic segment spans residues 213–276 (PESPRYLLIQ…LFTMQSLRWQ (64 aa)). Residues 277–297 (LISMIVLMAGQQLSGVNAIYY) form a helical membrane-spanning segment. D-fructose is bound by residues Gln287 and 295–297 (IYY). The Extracellular portion of the chain corresponds to 298-312 (YADQIYLSAGVKSDD). A helical membrane pass occupies residues 313–333 (VQYVTAGTGAVNVFMTILTIF). The Cytoplasmic segment spans residues 334-341 (VVELWGRR). The helical transmembrane segment at 342–362 (FLLLVGFSTCLIACLVLTAAL) threads the bilayer. Residues 363–370 (ALQNTISW) lie on the Extracellular side of the membrane. A helical transmembrane segment spans residues 371 to 393 (MPYISIVCVIVYVIGHALGPSPI). His386 lines the D-fructose pocket. Over 394–411 (PALLITEIFLQSSRPAAY) the chain is Cytoplasmic. Residues 412 to 432 (MIGGSVHWLSNFTVGLIFPFI) traverse the membrane as a helical segment. Position 418-419 (418-419 (HW)) interacts with D-fructose. Topologically, residues 433 to 438 (QMGLGP) are extracellular. A helical transmembrane segment spans residues 439–459 (YSFIIFATICFLTTIYIFMVV). The Cytoplasmic segment spans residues 460–501 (PETKGRTFIEINQIFTMKNKVSDVYPKKEEELGALPHAILEQ).

Belongs to the major facilitator superfamily. Sugar transporter (TC 2.A.1.1) family. Glucose transporter subfamily. As to expression, detected at the apical membrane of villi in the jejunum. Detected in jejunum mucosa. Detected in epididymis and whole testis (at protein level). Detected in small intestine, kidney and testis. Detected in cochlea, but not in inner or outer cochlear hair cells.

The protein localises to the apical cell membrane. The protein resides in the cell membrane. Its subcellular location is the sarcolemma. The catalysed reaction is D-fructose(out) = D-fructose(in). With respect to regulation, fructose uptake is inhibited by cytochalasin B. Its function is as follows. Functions as a fructose transporter that has only low activity with other monosaccharides. Can mediate the uptake of deoxyglucose, but with low efficiency. Essential for fructose uptake in the small intestine. Plays a role in the regulation of salt uptake and blood pressure in response to dietary fructose. Required for the development of high blood pressure in response to high dietary fructose intake. The polypeptide is Solute carrier family 2, facilitated glucose transporter member 5 (Mus musculus (Mouse)).